Reading from the N-terminus, the 169-residue chain is 2-C-methyl-D-erythritol 2,4-cyclodiphosphate synthase (169 aa).

Residues Asp13 and His15 each coordinate a divalent metal cation. Residues 13–15 (DIH) and 40–41 (HS) each bind 4-CDP-2-C-methyl-D-erythritol 2-phosphate. Residue His48 participates in a divalent metal cation binding. Residues 62–64 (DIG), 138–141 (TTNE), and Arg148 contribute to the 4-CDP-2-C-methyl-D-erythritol 2-phosphate site.

This sequence belongs to the IspF family. Homotrimer. Requires a divalent metal cation as cofactor.

The enzyme catalyses 4-CDP-2-C-methyl-D-erythritol 2-phosphate = 2-C-methyl-D-erythritol 2,4-cyclic diphosphate + CMP. It participates in isoprenoid biosynthesis; isopentenyl diphosphate biosynthesis via DXP pathway; isopentenyl diphosphate from 1-deoxy-D-xylulose 5-phosphate: step 4/6. Involved in the biosynthesis of isopentenyl diphosphate (IPP) and dimethylallyl diphosphate (DMAPP), two major building blocks of isoprenoid compounds. Catalyzes the conversion of 4-diphosphocytidyl-2-C-methyl-D-erythritol 2-phosphate (CDP-ME2P) to 2-C-methyl-D-erythritol 2,4-cyclodiphosphate (ME-CPP) with a corresponding release of cytidine 5-monophosphate (CMP). This is 2-C-methyl-D-erythritol 2,4-cyclodiphosphate synthase from Akkermansia muciniphila (strain ATCC BAA-835 / DSM 22959 / JCM 33894 / BCRC 81048 / CCUG 64013 / CIP 107961 / Muc).